Reading from the N-terminus, the 110-residue chain is uncharacterized protein (110 aa).

Basic and acidic residues predominate over residues 1–16 (MSVKLKYDKIDQRNGD). 2 disordered regions span residues 1 to 29 (MSVK…GNGN) and 73 to 100 (IKQQ…ESPN). The segment covering 20-29 (GNHNNCGNGN) has biased composition (low complexity).

This is an uncharacterized protein from Dictyostelium discoideum (Social amoeba).